Consider the following 532-residue polypeptide: Phosphoribosylamine--glycine ligase, chloroplastic (532 aa).

Residues 1 to 75 constitute a chloroplast transit peptide; sequence MSSLCASNCY…IQRRLFLLRC (75 aa). The 209-residue stretch at 204-412 folds into the ATP-grasp domain; sequence KNLCHKYNIP…LAKVLLAACK (209 aa).

The protein belongs to the GARS family.

It localises to the plastid. Its subcellular location is the chloroplast. It carries out the reaction 5-phospho-beta-D-ribosylamine + glycine + ATP = N(1)-(5-phospho-beta-D-ribosyl)glycinamide + ADP + phosphate + H(+). Its pathway is purine metabolism; IMP biosynthesis via de novo pathway; N(1)-(5-phospho-D-ribosyl)glycinamide from 5-phospho-alpha-D-ribose 1-diphosphate: step 2/2. The polypeptide is Phosphoribosylamine--glycine ligase, chloroplastic (PUR2) (Arabidopsis thaliana (Mouse-ear cress)).